Here is a 162-residue protein sequence, read N- to C-terminus: SsrA-binding protein (162 aa).

Belongs to the SmpB family.

It is found in the cytoplasm. Its function is as follows. Required for rescue of stalled ribosomes mediated by trans-translation. Binds to transfer-messenger RNA (tmRNA), required for stable association of tmRNA with ribosomes. tmRNA and SmpB together mimic tRNA shape, replacing the anticodon stem-loop with SmpB. tmRNA is encoded by the ssrA gene; the 2 termini fold to resemble tRNA(Ala) and it encodes a 'tag peptide', a short internal open reading frame. During trans-translation Ala-aminoacylated tmRNA acts like a tRNA, entering the A-site of stalled ribosomes, displacing the stalled mRNA. The ribosome then switches to translate the ORF on the tmRNA; the nascent peptide is terminated with the 'tag peptide' encoded by the tmRNA and targeted for degradation. The ribosome is freed to recommence translation, which seems to be the essential function of trans-translation. The protein is SsrA-binding protein of Colwellia psychrerythraea (strain 34H / ATCC BAA-681) (Vibrio psychroerythus).